The sequence spans 346 residues: Holliday junction branch migration complex subunit RuvB (346 aa).

Residues 1-16 (MSDADRLITPEKRGED) show a composition bias toward basic and acidic residues. The disordered stretch occupies residues 1-23 (MSDADRLITPEKRGEDIDTTLRP). The segment at 1 to 182 (MSDADRLITP…FGIPVRLAFY (182 aa)) is large ATPase domain (RuvB-L). Residues Leu-21, Arg-22, Gly-63, Lys-66, Thr-67, Thr-68, 129–131 (EDF), Arg-172, Tyr-182, and Arg-219 contribute to the ATP site. Mg(2+) is bound at residue Thr-67. Positions 183–253 (TVDELELIVR…IADEALTRLL (71 aa)) are small ATPAse domain (RuvB-S). The head domain (RuvB-H) stretch occupies residues 256 to 346 (NMGLDQLDMR…AQFRLTLEDD (91 aa)). 3 residues coordinate DNA: Arg-292, Arg-311, and Arg-316.

This sequence belongs to the RuvB family. Homohexamer. Forms an RuvA(8)-RuvB(12)-Holliday junction (HJ) complex. HJ DNA is sandwiched between 2 RuvA tetramers; dsDNA enters through RuvA and exits via RuvB. An RuvB hexamer assembles on each DNA strand where it exits the tetramer. Each RuvB hexamer is contacted by two RuvA subunits (via domain III) on 2 adjacent RuvB subunits; this complex drives branch migration. In the full resolvosome a probable DNA-RuvA(4)-RuvB(12)-RuvC(2) complex forms which resolves the HJ.

It is found in the cytoplasm. The catalysed reaction is ATP + H2O = ADP + phosphate + H(+). In terms of biological role, the RuvA-RuvB-RuvC complex processes Holliday junction (HJ) DNA during genetic recombination and DNA repair, while the RuvA-RuvB complex plays an important role in the rescue of blocked DNA replication forks via replication fork reversal (RFR). RuvA specifically binds to HJ cruciform DNA, conferring on it an open structure. The RuvB hexamer acts as an ATP-dependent pump, pulling dsDNA into and through the RuvAB complex. RuvB forms 2 homohexamers on either side of HJ DNA bound by 1 or 2 RuvA tetramers; 4 subunits per hexamer contact DNA at a time. Coordinated motions by a converter formed by DNA-disengaged RuvB subunits stimulates ATP hydrolysis and nucleotide exchange. Immobilization of the converter enables RuvB to convert the ATP-contained energy into a lever motion, pulling 2 nucleotides of DNA out of the RuvA tetramer per ATP hydrolyzed, thus driving DNA branch migration. The RuvB motors rotate together with the DNA substrate, which together with the progressing nucleotide cycle form the mechanistic basis for DNA recombination by continuous HJ branch migration. Branch migration allows RuvC to scan DNA until it finds its consensus sequence, where it cleaves and resolves cruciform DNA. The sequence is that of Holliday junction branch migration complex subunit RuvB from Agrobacterium fabrum (strain C58 / ATCC 33970) (Agrobacterium tumefaciens (strain C58)).